Reading from the N-terminus, the 256-residue chain is Type III pantothenate kinase (256 aa).

6–13 (DVGNSNIV) provides a ligand contact to ATP. Substrate is bound by residues tyrosine 100 and 107–110 (GADR). Aspartate 109 serves as the catalytic Proton acceptor. Aspartate 129 serves as a coordination point for K(+). Threonine 132 lines the ATP pocket. Threonine 184 contributes to the substrate binding site.

This sequence belongs to the type III pantothenate kinase family. In terms of assembly, homodimer. NH4(+) is required as a cofactor. It depends on K(+) as a cofactor.

Its subcellular location is the cytoplasm. The enzyme catalyses (R)-pantothenate + ATP = (R)-4'-phosphopantothenate + ADP + H(+). The protein operates within cofactor biosynthesis; coenzyme A biosynthesis; CoA from (R)-pantothenate: step 1/5. In terms of biological role, catalyzes the phosphorylation of pantothenate (Pan), the first step in CoA biosynthesis. This chain is Type III pantothenate kinase, found in Geotalea uraniireducens (strain Rf4) (Geobacter uraniireducens).